Here is a 311-residue protein sequence, read N- to C-terminus: Aspartate carbamoyltransferase catalytic subunit (311 aa).

Carbamoyl phosphate contacts are provided by Arg58 and Thr59. Lys86 serves as a coordination point for L-aspartate. The carbamoyl phosphate site is built by Arg108, His136, and Gln139. L-aspartate contacts are provided by Arg169 and Arg224. 2 residues coordinate carbamoyl phosphate: Gly265 and Pro266.

Belongs to the aspartate/ornithine carbamoyltransferase superfamily. ATCase family. In terms of assembly, heterododecamer (2C3:3R2) of six catalytic PyrB chains organized as two trimers (C3), and six regulatory PyrI chains organized as three dimers (R2).

The catalysed reaction is carbamoyl phosphate + L-aspartate = N-carbamoyl-L-aspartate + phosphate + H(+). It functions in the pathway pyrimidine metabolism; UMP biosynthesis via de novo pathway; (S)-dihydroorotate from bicarbonate: step 2/3. Its function is as follows. Catalyzes the condensation of carbamoyl phosphate and aspartate to form carbamoyl aspartate and inorganic phosphate, the committed step in the de novo pyrimidine nucleotide biosynthesis pathway. This chain is Aspartate carbamoyltransferase catalytic subunit, found in Geotalea uraniireducens (strain Rf4) (Geobacter uraniireducens).